We begin with the raw amino-acid sequence, 418 residues long: UDP-N-acetylglucosamine 1-carboxyvinyltransferase (418 aa).

22-23 is a binding site for phosphoenolpyruvate; the sequence is KN. Position 91 (arginine 91) interacts with UDP-N-acetyl-alpha-D-glucosamine. Cysteine 115 (proton donor) is an active-site residue. 2-(S-cysteinyl)pyruvic acid O-phosphothioketal is present on cysteine 115. 2 residues coordinate UDP-N-acetyl-alpha-D-glucosamine: aspartate 303 and isoleucine 325.

Belongs to the EPSP synthase family. MurA subfamily.

The protein localises to the cytoplasm. It catalyses the reaction phosphoenolpyruvate + UDP-N-acetyl-alpha-D-glucosamine = UDP-N-acetyl-3-O-(1-carboxyvinyl)-alpha-D-glucosamine + phosphate. It functions in the pathway cell wall biogenesis; peptidoglycan biosynthesis. Functionally, cell wall formation. Adds enolpyruvyl to UDP-N-acetylglucosamine. This chain is UDP-N-acetylglucosamine 1-carboxyvinyltransferase, found in Syntrophobacter fumaroxidans (strain DSM 10017 / MPOB).